The chain runs to 257 residues: 24 kDa outer membrane protein (257 aa).

The N-terminal stretch at 1-21 is a signal peptide; the sequence is MKNKSKLLACCLMALPISSFS.

This sequence belongs to the MipA/OmpV family.

The protein localises to the cell outer membrane. This Pasteurella multocida (strain Pm70) protein is 24 kDa outer membrane protein.